The chain runs to 428 residues: Glutamate-1-semialdehyde 2,1-aminomutase (428 aa).

Lys267 carries the N6-(pyridoxal phosphate)lysine modification.

Belongs to the class-III pyridoxal-phosphate-dependent aminotransferase family. HemL subfamily. In terms of assembly, homodimer. Pyridoxal 5'-phosphate serves as cofactor.

Its subcellular location is the cytoplasm. It catalyses the reaction (S)-4-amino-5-oxopentanoate = 5-aminolevulinate. The protein operates within porphyrin-containing compound metabolism; protoporphyrin-IX biosynthesis; 5-aminolevulinate from L-glutamyl-tRNA(Glu): step 2/2. It functions in the pathway porphyrin-containing compound metabolism; chlorophyll biosynthesis. This Prochlorococcus marinus (strain MIT 9313) protein is Glutamate-1-semialdehyde 2,1-aminomutase.